A 532-amino-acid polypeptide reads, in one-letter code: Small ribosomal subunit protein uS2cz (532 aa).

Positions 1 to 271 (METLEKNFKK…SPISSKEKKA (271 aa)) are N-terminal extension. TRAM domains are found at residues 38–97 (ALQA…SILN), 127–186 (DFKV…KPIL), and 197–260 (NQMI…KILK).

It belongs to the universal ribosomal protein uS2 family.

It localises to the plastid. The protein localises to the chloroplast. The sequence is that of Small ribosomal subunit protein uS2cz (rps2-1) from Tetradesmus obliquus (Green alga).